Reading from the N-terminus, the 466-residue chain is Argininosuccinate lyase 1 (466 aa).

This sequence belongs to the lyase 1 family. Argininosuccinate lyase subfamily.

Its subcellular location is the cytoplasm. It catalyses the reaction 2-(N(omega)-L-arginino)succinate = fumarate + L-arginine. It functions in the pathway amino-acid biosynthesis; L-arginine biosynthesis; L-arginine from L-ornithine and carbamoyl phosphate: step 3/3. In Mesorhizobium japonicum (strain LMG 29417 / CECT 9101 / MAFF 303099) (Mesorhizobium loti (strain MAFF 303099)), this protein is Argininosuccinate lyase 1.